The sequence spans 444 residues: Alpha-(1,3)-fucosyltransferase B (444 aa).

The Cytoplasmic portion of the chain corresponds to Met-1–Arg-6. Residues Tyr-7–Glu-27 form a helical; Signal-anchor for type II membrane protein membrane-spanning segment. The Lumenal segment spans residues Asn-28–Thr-444. 3 N-linked (GlcNAc...) asparagine glycosylation sites follow: Asn-279, Asn-437, and Asn-440.

It belongs to the glycosyltransferase 10 family.

Its subcellular location is the golgi apparatus. The protein localises to the golgi stack membrane. It participates in protein modification; protein glycosylation. The sequence is that of Alpha-(1,3)-fucosyltransferase B (FucTB) from Drosophila melanogaster (Fruit fly).